The chain runs to 477 residues: Zinc metalloproteinase/disintegrin (477 aa).

Positions 1–20 (MIEVLLVTICLAAFPYQGSS) are cleaved as a signal peptide. Residues 21–187 (IILESGNVND…PIKKASQSNL (167 aa)) constitute a propeptide that is removed on maturation. One can recognise a Peptidase M12B domain in the interval 193-389 (RYIELFLVVD…DNPQCILNKQ (197 aa)). Residues Glu196 and Asp280 each coordinate Ca(2+). 3 disulfide bridges follow: Cys304–Cys384, Cys344–Cys368, and Cys346–Cys351. His329 is a Zn(2+) binding site. Glu330 is a catalytic residue. Residues His333 and His339 each contribute to the Zn(2+) site. 2 residues coordinate Ca(2+): Cys384 and Asn387. The propeptide occupies 390–404 (LRTDTVSTPVSGKNF). The Disintegrin domain maps to 396–477 (STPVSGKNFG…AGCPRNPFHA (82 aa)). Cystine bridges form between Cys410-Cys425, Cys412-Cys420, Cys419-Cys442, Cys433-Cys439, Cys438-Cys463, and Cys451-Cys470. The short motif at 455–457 (RGD) is the Cell attachment site element.

This sequence belongs to the venom metalloproteinase (M12B) family. P-II subfamily. P-IIa sub-subfamily. As to quaternary structure, monomer. The cofactor is Zn(2+). Expressed by the venom gland.

It localises to the secreted. Inhibited by 1,10-phenanthroline and EDTA. Impairs hemostasis in the envenomed animal. Does not exhibit detectable plasminogen activating activity. Has hemagglutinating activity on red blood cells. Cleaves insulin B chain at '38-Ala-|-Leu-39' and '40-Tyr-|-Leu-41' bonds. In terms of biological role, this recombinant protein shows high inhibitory activity on collagen-induced platelet aggregation. This is Zinc metalloproteinase/disintegrin from Bothrops jararaca (Jararaca).